The following is a 180-amino-acid chain: MQLLLLTVGLALICGLQAQEGNHEEPQGGLEELSGRWHSVALASNKSDLIKPWGHFRVFIHSMSAKDGNLHGDILIPQDGQCEKVSLTAFKTATSNKFDLEYWGHNDLYLAEVDPKSYLILYMINQYNDDTSLVAHLMVRDLSRQQDFLPAFESVCEDIGLHKDQIVVLSDDDRCQGSRD.

The signal sequence occupies residues 1-18 (MQLLLLTVGLALICGLQA). Asn45 is a glycosylation site (N-linked (GlcNAc...) asparagine). Cysteines 82 and 175 form a disulfide.

This sequence belongs to the calycin superfamily. Lipocalin family. Tongue epithelial tissue and parotid gland.

The protein localises to the secreted. The protein is Minor allergen Can f 2 of Canis lupus familiaris (Dog).